The chain runs to 427 residues: Lactadherin (427 aa).

A signal peptide spans 1 to 22 (MQFSRVLAALCGVLLCASGLFA). 2 EGF-like domains span residues 24 to 61 (SGDF…LVCN) and 64 to 108 (EKGP…IHCE). 3 disulfides stabilise this stretch: Cys28–Cys39, Cys33–Cys49, and Cys51–Cys60. N-linked (GlcNAc...) asparagine glycosylation is present at Asn61. Cystine bridges form between Cys68–Cys79, Cys73–Cys96, Cys98–Cys107, Cys111–Cys267, Cys254–Cys258, and Cys272–Cys427. The Cell attachment site signature appears at 87-89 (RGD). 2 F5/8 type C domains span residues 111–267 (CSTK…LLGC) and 272–427 (CSEP…LLGC). The N-linked (GlcNAc...) asparagine glycan is linked to Asn230. N-linked (GlcNAc...) asparagine glycans are attached at residues Asn280 and Asn390.

As to expression, spleen, lung, heart, brain and muscle.

The protein resides in the membrane. Its subcellular location is the secreted. It localises to the cytoplasmic vesicle. It is found in the secretory vesicle. The protein localises to the acrosome membrane. Functionally, contributes to phagocytic removal of apoptotic cells in many tissues. Plays an important role in the maintenance of intestinal epithelial homeostasis and the promotion of mucosal healing. Promotes VEGF-dependent neovascularization. Specific ligand for the alpha-v/beta-3 and alpha-v/beta-5 receptors. Also binds to phosphatidylserine-enriched cell surfaces in a receptor-independent manner. Zona pellucida-binding protein which may play a role in gamete interaction. Appears to participate in the O-acetylation of GD3 ganglioside sialic acid. In Rattus norvegicus (Rat), this protein is Lactadherin (Mfge8).